We begin with the raw amino-acid sequence, 86 residues long: Large ribosomal subunit protein bL27 (86 aa).

Positions 1 to 24 (MATKKAGGSSRNGRDSAGRRLGVK) are disordered.

It belongs to the bacterial ribosomal protein bL27 family.

The sequence is that of Large ribosomal subunit protein bL27 from Rickettsia felis (strain ATCC VR-1525 / URRWXCal2) (Rickettsia azadi).